The sequence spans 200 residues: ATP synthase subunit s, mitochondrial (200 aa).

The N-terminal 25 residues, 1–25, are a transit peptide targeting the mitochondrion; that stretch reads MMLFGKVSQQLCGIKKLPWSCDSRY. Residues 1-61 are N-terminal domain; it reads MMLFGKVSQQ…SEWLLRCGAM (61 aa). Gly59 provides a ligand contact to Mg(2+). LRR repeat units follow at residues 62-87, 88-116, 117-141, and 142-173; these read VRYH…KYKI, QAID…KIRL, CKCH…KSIL, and EMEI…LSDL. A Mg(2+)-binding site is contributed by Thr93.

This sequence belongs to the ATP synthase subunit s family. As to quaternary structure, homotetramer. Associates with ATP synthase.

The protein localises to the mitochondrion. The protein resides in the mitochondrion inner membrane. Its function is as follows. Involved in regulation of mitochondrial membrane ATP synthase. Necessary for H(+) conduction of ATP synthase. Facilitates energy-driven catalysis of ATP synthesis by blocking a proton leak through an alternative proton exit pathway. In Macaca fascicularis (Crab-eating macaque), this protein is ATP synthase subunit s, mitochondrial (DMAC2L).